A 440-amino-acid polypeptide reads, in one-letter code: Phosphatidylcholine-sterol acyltransferase (440 aa).

A signal peptide spans 1 to 24; sequence MGPPGSPWQWVLLLLGLLLPPAAP. Residue Asn44 is glycosylated (N-linked (GlcNAc...) asparagine). A disulfide bridge connects residues Cys74 and Cys98. Asn108 is a glycosylation site (N-linked (GlcNAc...) asparagine). Ser205 acts as the Nucleophile in catalysis. An N-linked (GlcNAc...) asparagine glycan is attached at Asn296. A disulfide bridge connects residues Cys337 and Cys380. Active-site charge relay system residues include Asp369 and His401. Asn408 carries an N-linked (GlcNAc...) asparagine glycan.

This sequence belongs to the AB hydrolase superfamily. Lipase family. As to expression, detected in blood plasma (at protein level). Highly expressed in liver.

The protein resides in the secreted. The enzyme catalyses a sterol + a 1,2-diacyl-sn-glycero-3-phosphocholine = a sterol ester + a 1-acyl-sn-glycero-3-phosphocholine. It catalyses the reaction a 1-O-alkyl-2-acetyl-sn-glycero-3-phosphocholine + H2O = a 1-O-alkyl-sn-glycero-3-phosphocholine + acetate + H(+). The catalysed reaction is a 1-hexadecanoyl-2-acyl-sn-glycero-3-phosphocholine + (24S)-hydroxycholesterol = (24S)-24-hydroxycholesterol ester + 1-hexadecanoyl-sn-glycero-3-phosphocholine. It carries out the reaction (24S)-hydroxycholesterol + 1-hexadecanoyl-2-(9Z,12Z-octadecadienoyl)-sn-glycero-3-phosphocholine = (24S)-hydroxycholesterol 3-linoleoate + 1-hexadecanoyl-sn-glycero-3-phosphocholine. The enzyme catalyses 1-hexadecanoyl-2-(5Z,8Z,11Z,14Z-eicosatetraenoyl)-sn-glycero-3-phosphocholine + cholesterol = cholesteryl (5Z,8Z,11Z,14Z)-eicosatetraenoate + 1-hexadecanoyl-sn-glycero-3-phosphocholine. It catalyses the reaction 1-hexadecanoyl-2-(9Z-octadecenoyl)-sn-glycero-3-phosphocholine + cholesterol = cholesteryl (9Z-octadecenoate) + 1-hexadecanoyl-sn-glycero-3-phosphocholine. The catalysed reaction is 1-hexadecanoyl-2-(8Z,11Z,14Z-eicosatrienoyl)-sn-glycero-3-phosphocholine + cholesterol = cholesteryl (8Z,11Z,14Z)-eicosatrienoate + 1-hexadecanoyl-sn-glycero-3-phosphocholine. It carries out the reaction 1-hexadecanoyl-2-(5Z,8Z,11Z-eicosatrienoyl)-sn-glycero-3-phosphocholine + cholesterol = cholesteryl (5Z,8Z,11Z)-eicosatrienoate + 1-hexadecanoyl-sn-glycero-3-phosphocholine. The enzyme catalyses 1-hexadecanoyl-2-(5Z,8Z,11Z,14Z,17Z-eicosapentaenoyl)-sn-glycero-3-phosphocholine + cholesterol = (5Z,8Z,11Z,14Z,17Z-eicosapentaenoyl)-cholesterol + 1-hexadecanoyl-sn-glycero-3-phosphocholine. It catalyses the reaction 1-hexadecanoyl-2-(9Z,12Z-octadecadienoyl)-sn-glycero-3-phosphocholine + cholesterol = cholesteryl (9Z,12Z)-octadecadienoate + 1-hexadecanoyl-sn-glycero-3-phosphocholine. The catalysed reaction is 1-hexadecanoyl-2-(6Z,9Z,12Z-octadecatrienoyl)-sn-glycero-3-phosphocholine + cholesterol = (6Z,9Z,12Z-octadecatrienoyl)-cholesterol + 1-hexadecanoyl-sn-glycero-3-phosphocholine. It carries out the reaction 1-hexadecanoyl-2-(11Z,14Z,17Z-eicosatrienoyl)-sn-glycero-3-phosphocholine + cholesterol = (11Z,14Z,17Z-eicosatrienoyl)-cholesterol + 1-hexadecanoyl-sn-glycero-3-phosphocholine. The enzyme catalyses 1-hexadecanoyl-2-(9Z,12Z,15Z-octadecatrienoyl)-sn-glycero-3-phosphocholine + cholesterol = (9Z,12Z,15Z-octadecatrienoyl)-cholesterol + 1-hexadecanoyl-sn-glycero-3-phosphocholine. It catalyses the reaction 1-hexadecanoyl-2-(9Z,12Z-octadecadienoyl)-sn-glycero-3-phosphocholine + H2O = (9Z,12Z)-octadecadienoate + 1-hexadecanoyl-sn-glycero-3-phosphocholine + H(+). The catalysed reaction is 1-hexadecanoyl-2-(5Z,8Z,11Z,14Z-eicosatetraenoyl)-sn-glycero-3-phosphocholine + H2O = 1-hexadecanoyl-sn-glycero-3-phosphocholine + (5Z,8Z,11Z,14Z)-eicosatetraenoate + H(+). It carries out the reaction a 1-O-alkyl-2-acetyl-sn-glycero-3-phosphocholine + 1-hexadecanoyl-sn-glycero-3-phosphocholine = 1-hexadecanoyl-2-acetyl-sn-glycero-3-phosphocholine + a 1-O-alkyl-sn-glycero-3-phosphocholine. Functionally, central enzyme in the extracellular metabolism of plasma lipoproteins. Synthesized mainly in the liver and secreted into plasma where it converts cholesterol and phosphatidylcholines (lecithins) to cholesteryl esters and lysophosphatidylcholines on the surface of high and low density lipoproteins (HDLs and LDLs). The cholesterol ester is then transported back to the liver. Also produced in the brain by primary astrocytes, and esterifies free cholesterol on nascent APOE-containing lipoproteins secreted from glia and influences cerebral spinal fluid (CSF) APOE- and APOA1 levels. Together with APOE and the cholesterol transporter ABCA1, plays a key role in the maturation of glial-derived, nascent lipoproteins. Required for remodeling high-density lipoprotein particles into their spherical forms. Has a preference for plasma 16:0-18:2 or 18:O-18:2 phosphatidylcholines. Catalyzes the hydrolysis of 1-O-alkyl-2-acetyl-sn-glycero-3-phosphocholine (platelet-activating factor or PAF) to 1-O-alkyl-sn-glycero-3-phosphocholine (lyso-PAF). Also catalyzes the transfer of the acetate group from PAF to 1-hexadecanoyl-sn-glycero-3-phosphocholine forming lyso-PAF. Catalyzes the esterification of (24S)-hydroxycholesterol (24(S)OH-C), also known as cerebrosterol to produce 24(S)OH-C monoesters. The polypeptide is Phosphatidylcholine-sterol acyltransferase (LCAT) (Oryctolagus cuniculus (Rabbit)).